The following is a 1134-amino-acid chain: DENN domain-containing protein 2B (1134 aa).

Residues 1–13 (MTMTANKNSSITH) are compositionally biased toward polar residues. The segment at 1–90 (MTMTANKNSS…DPSPETSPPI (90 aa)) is disordered. 2 positions are modified to phosphoserine: serine 30 and serine 32. Over residues 32 to 43 (SPPPVLYPPRSP) the composition is skewed to pro residues. Threonine 228 is subject to Phosphothreonine. Position 230 is a phosphoserine (serine 230). Disordered regions lie at residues 233-273 (SYPE…GIRK) and 289-571 (LKEQ…KRHS). Over residues 249–259 (SLYRLEKRPGR) the composition is skewed to basic and acidic residues. Positions 315 to 348 (GTLGTLEEPTGTASVSPSSRAGGVAGVAGEAGPP) are enriched in low complexity. Threonine 361 carries the post-translational modification Phosphothreonine. Serine 365 carries the phosphoserine modification. Positions 370-385 (LLPPKSSPDPAVNPVP) are enriched in pro residues. Positions 389–399 (RTFEYEADKNP) are enriched in basic and acidic residues. Residues 406 to 428 (GLPPSPTPAAPPPLPSTPAPPVT) show a composition bias toward pro residues. Residues 429–443 (RRPKKDMRGHRKSQN) show a composition bias toward basic residues. Residues 453 to 478 (SSLQSLYPSSPTENGTESQPKFGSKS) show a composition bias toward polar residues. Phosphothreonine is present on threonine 479. Polar residues-rich tracts occupy residues 511–521 (KSQQLSENSLD) and 542–555 (SLKS…SGNW). A Phosphoserine modification is found at serine 542. The segment covering 559–570 (KSHRLPRLPKRH) has biased composition (basic residues). Phosphoserine occurs at positions 571 and 619. The interval 633–658 (LSMSSLETASLRDENSESESDSDDRF) is disordered. The uDENN domain maps to 695–843 (EYFVVVSLKK…PFPAPGKTIK (149 aa)). The 134-residue stretch at 865–998 (RLEHVDFECL…LQAALEQALE (134 aa)) folds into the cDENN domain. One can recognise a dDENN domain in the interval 1000-1093 (KSELISQDSD…QDRELRKCRA (94 aa)).

Interacts with ITSN1 and GRB2. Isoform 1 interacts with the SH3 domain of ABL1. Post-translationally, phosphorylated. Phosphorylation decreases ITSN1 binding.

The protein localises to the cytoplasm. Its subcellular location is the cell cortex. It localises to the cell membrane. The protein resides in the recycling endosome. Its function is as follows. May be involved in cytoskeletal organization and tumorogenicity. Seems to be involved in a signaling transduction pathway leading to activation of MAPK1/ERK2. Plays a role in EGFR trafficking from recycling endosomes back to the cell membrane. Functionally, guanine nucleotide exchange factor (GEF) which may activate RAB9A and RAB9B. Promotes the exchange of GDP to GTP, converting inactive GDP-bound Rab proteins into their active GTP-bound form. May block ERK2 activation stimulated by ABL1. May alter cell morphology and cell growth. The protein is DENN domain-containing protein 2B (Dennd2b) of Mus musculus (Mouse).